A 238-amino-acid chain; its full sequence is Glycerol uptake facilitator protein 4 (238 aa).

The next 2 helical transmembrane spans lie at 2–22 (IHQL…GVGV) and 39–59 (IFAI…FGNV). Residues 62-64 (NPA) carry the NPA 1 motif. 3 consecutive transmembrane segments (helical) span residues 80 to 100 (FIPY…IVWI), 135 to 155 (FFVE…ISEV), and 158 to 178 (PGIV…GLGG). Residues 185-187 (NLA) carry the NPA 2 motif. Residues 211 to 231 (YGIIVPGIAPFVGAACAALFM) form a helical membrane-spanning segment.

Belongs to the MIP/aquaporin (TC 1.A.8) family.

It localises to the cell membrane. In terms of biological role, transporter that facilitates the transmembrane diffusion of water, dihydroxyacetone, glycerol, urea, H(2)O(2) and D/L-lactic acid. Is involved in the cellular racemization of lactate and lactate metabolism, but has likely a more general physiological role. The transported molecule is indeed lactic acid and not the lactate anion, in agreement with the assumption that, with very few exceptions, MIPs (major intrinsic proteins) only facilitate the transport of uncharged solutes. In Lactiplantibacillus plantarum (strain ATCC BAA-793 / NCIMB 8826 / WCFS1) (Lactobacillus plantarum), this protein is Glycerol uptake facilitator protein 4.